A 134-amino-acid chain; its full sequence is Phosphoribosyl-AMP cyclohydrolase (134 aa).

Asp-78 contacts Mg(2+). Cys-79 contacts Zn(2+). Mg(2+) is bound by residues Asp-80 and Asp-82. Residues Cys-96 and Cys-103 each coordinate Zn(2+).

The protein belongs to the PRA-CH family. In terms of assembly, homodimer. It depends on Mg(2+) as a cofactor. Zn(2+) is required as a cofactor.

It is found in the cytoplasm. The enzyme catalyses 1-(5-phospho-beta-D-ribosyl)-5'-AMP + H2O = 1-(5-phospho-beta-D-ribosyl)-5-[(5-phospho-beta-D-ribosylamino)methylideneamino]imidazole-4-carboxamide. It functions in the pathway amino-acid biosynthesis; L-histidine biosynthesis; L-histidine from 5-phospho-alpha-D-ribose 1-diphosphate: step 3/9. Its function is as follows. Catalyzes the hydrolysis of the adenine ring of phosphoribosyl-AMP. This chain is Phosphoribosyl-AMP cyclohydrolase, found in Cupriavidus necator (strain ATCC 17699 / DSM 428 / KCTC 22496 / NCIMB 10442 / H16 / Stanier 337) (Ralstonia eutropha).